Consider the following 474-residue polypeptide: tRNA-2-methylthio-N(6)-dimethylallyladenosine synthase (474 aa).

Positions 3-120 constitute an MTTase N-terminal domain; it reads KKLHIKTWGC…LPDMIEQVRR (118 aa). The [4Fe-4S] cluster site is built by Cys12, Cys49, Cys83, Cys157, Cys161, and Cys164. One can recognise a Radical SAM core domain in the interval 143–375; it reads RAEGPTAFVS…QDRITQQAMR (233 aa). The TRAM domain maps to 378 to 441; sequence RHMMGTVQRI…TNSLRGKFIR (64 aa).

This sequence belongs to the methylthiotransferase family. MiaB subfamily. As to quaternary structure, monomer. It depends on [4Fe-4S] cluster as a cofactor.

The protein localises to the cytoplasm. The catalysed reaction is N(6)-dimethylallyladenosine(37) in tRNA + (sulfur carrier)-SH + AH2 + 2 S-adenosyl-L-methionine = 2-methylsulfanyl-N(6)-dimethylallyladenosine(37) in tRNA + (sulfur carrier)-H + 5'-deoxyadenosine + L-methionine + A + S-adenosyl-L-homocysteine + 2 H(+). Its function is as follows. Catalyzes the methylthiolation of N6-(dimethylallyl)adenosine (i(6)A), leading to the formation of 2-methylthio-N6-(dimethylallyl)adenosine (ms(2)i(6)A) at position 37 in tRNAs that read codons beginning with uridine. The sequence is that of tRNA-2-methylthio-N(6)-dimethylallyladenosine synthase from Shewanella sp. (strain MR-4).